A 454-amino-acid polypeptide reads, in one-letter code: tRNA modification GTPase MnmE (454 aa).

The (6S)-5-formyl-5,6,7,8-tetrahydrofolate site is built by Arg23, Glu80, and Lys120. Positions 216–377 (GMKVVIAGRP…LRNHLKQSMG (162 aa)) constitute a TrmE-type G domain. Asn226 lines the K(+) pocket. GTP contacts are provided by residues 226–231 (NAGKSS), 245–251 (TDIAGTT), 270–273 (DTAG), 335–338 (NKAD), and 358–360 (SAR). Residue Ser230 participates in Mg(2+) binding. Residues Thr245, Ile247, and Thr250 each contribute to the K(+) site. Residue Thr251 participates in Mg(2+) binding. (6S)-5-formyl-5,6,7,8-tetrahydrofolate is bound at residue Lys454.

This sequence belongs to the TRAFAC class TrmE-Era-EngA-EngB-Septin-like GTPase superfamily. TrmE GTPase family. Homodimer. Heterotetramer of two MnmE and two MnmG subunits. K(+) is required as a cofactor.

It is found in the cytoplasm. In terms of biological role, exhibits a very high intrinsic GTPase hydrolysis rate. Involved in the addition of a carboxymethylaminomethyl (cmnm) group at the wobble position (U34) of certain tRNAs, forming tRNA-cmnm(5)s(2)U34. The protein is tRNA modification GTPase MnmE of Escherichia coli (strain SMS-3-5 / SECEC).